Here is a 278-residue protein sequence, read N- to C-terminus: Large ribosomal subunit protein uL2 (278 aa).

The disordered stretch occupies residues 201-278; that stretch reads HGNINDGKAG…IMRSRHQKKK (78 aa). The segment covering 210–221 has biased composition (basic residues); sequence GRSRWRGKRPHV.

The protein belongs to the universal ribosomal protein uL2 family. As to quaternary structure, part of the 50S ribosomal subunit. Forms a bridge to the 30S subunit in the 70S ribosome.

In terms of biological role, one of the primary rRNA binding proteins. Required for association of the 30S and 50S subunits to form the 70S ribosome, for tRNA binding and peptide bond formation. It has been suggested to have peptidyltransferase activity; this is somewhat controversial. Makes several contacts with the 16S rRNA in the 70S ribosome. This is Large ribosomal subunit protein uL2 from Allorhizobium ampelinum (strain ATCC BAA-846 / DSM 112012 / S4) (Agrobacterium vitis (strain S4)).